The following is a 456-amino-acid chain: Bis(5'-adenosyl)-triphosphatase enpp4 (456 aa).

Positions 1 to 18 are cleaved as a signal peptide; it reads MFNMKILVIPLFWGLVTG. The Extracellular segment spans residues 19 to 410; that stretch reads YKGNSSDSSA…DQWCINLPEA (392 aa). Zn(2+)-binding residues include aspartate 37 and threonine 73. Threonine 73 functions as the AMP-threonine intermediate in the catalytic mechanism. A substrate-binding site is contributed by asparagine 94. Asparagine 148 carries N-linked (GlcNAc...) asparagine glycosylation. A substrate-binding site is contributed by tyrosine 157. N-linked (GlcNAc...) asparagine glycosylation is present at asparagine 169. Residues aspartate 192, histidine 196, aspartate 240, and histidine 241 each coordinate Zn(2+). Aspartate 192 serves as a coordination point for substrate. Cysteine 257 and cysteine 290 are disulfide-bonded. N-linked (GlcNAc...) asparagine glycans are attached at residues asparagine 279 and asparagine 330. Histidine 339 lines the Zn(2+) pocket. Residue asparagine 389 is glycosylated (N-linked (GlcNAc...) asparagine). The cysteines at positions 397 and 404 are disulfide-linked. The helical transmembrane segment at 411 to 431 threads the bilayer; that stretch reads IGIVVSALLVLTMLTGLMIFM. At 432–456 the chain is on the cytoplasmic side; the sequence is RSRASTSRPFSRLQLQEDDDDPLID.

This sequence belongs to the nucleotide pyrophosphatase/phosphodiesterase family. Zn(2+) serves as cofactor.

The protein localises to the cell membrane. The enzyme catalyses P(1),P(3)-bis(5'-adenosyl) triphosphate + H2O = AMP + ADP + 2 H(+). Hydrolyzes extracellular Ap3A into AMP and ADP, and Ap4A into AMP and ATP. Ap3A and Ap4A are diadenosine polyphosphates thought to induce proliferation of vascular smooth muscle cells. Acts as a procoagulant, mediating platelet aggregation at the site of nascent thrombus via release of ADP from Ap3A and activation of ADP receptors. This chain is Bis(5'-adenosyl)-triphosphatase enpp4 (Enpp4), found in Mus musculus (Mouse).